The following is a 522-amino-acid chain: U4/U6 small nuclear ribonucleoprotein Prp4 (522 aa).

Polar residues predominate over residues 1–13; that stretch reads MASSRASSTQATK. Residues 1–20 form a disordered region; the sequence is MASSRASSTQATKTKAPDDL. Position 27 is an N6-acetyllysine (Lys-27). WD repeat units lie at residues 229-268, 271-318, 321-360, 363-402, 405-444, 447-487, and 490-521; these read GDDRPISYCHFSPNSKMLATACWSGLCKLWSVPDCNLLHT, GHNT…PVAD, GHTVRVARVMWHPSGRFLGTTCYDRSWRLWDLEAQEEILH, GHSMGVYDIAFHQDGSLAGTGGLDAFGRVWDLRTGRCIMF, GHLKEIYGINFSPNGYHIATGSGDNTCKVWDLRQRRCVYT, AHQN…PLKT, and GHEGKVMGLDISSDGQLIATCSYDRTFKLWMA.

Component of the precatalytic spliceosome (spliceosome B complex). Component of the U4/U6-U5 tri-snRNP complex, a building block of the precatalytic spliceosome (spliceosome B complex). The U4/U6-U5 tri-snRNP complex is composed of the U4, U6 and U5 snRNAs and at least PRPF3, PRPF4, PRPF6, PRPF8, PRPF31, SNRNP200, TXNL4A, SNRNP40, SNRPB, SNRPD1, SNRPD2, SNRPD3, SNRPE, SNRPF, SNRPG, DDX23, CD2BP2, PPIH, SNU13, EFTUD2, SART1 and USP39, plus LSM2, LSM3, LSM4, LSM5, LSM6, LSM7 and LSM8. Interacts directly with PRPF18, PPIH and PRPF3. Part of a heteromeric complex containing PPIH, PRPF3 and PRPF4 that is stable in the absence of RNA. Interacts with ERCC6.

Its subcellular location is the nucleus. The protein localises to the nucleus speckle. In terms of biological role, plays a role in pre-mRNA splicing as component of the U4/U6-U5 tri-snRNP complex that is involved in spliceosome assembly, and as component of the precatalytic spliceosome (spliceosome B complex). This chain is U4/U6 small nuclear ribonucleoprotein Prp4 (PRPF4), found in Homo sapiens (Human).